Consider the following 464-residue polypeptide: Soluble pyridine nucleotide transhydrogenase (464 aa).

35–44 contributes to the FAD binding site; that stretch reads DNRPLVGGNC.

It belongs to the class-I pyridine nucleotide-disulfide oxidoreductase family. It depends on FAD as a cofactor.

It localises to the cytoplasm. It catalyses the reaction NAD(+) + NADPH = NADH + NADP(+). Conversion of NADPH, generated by peripheral catabolic pathways, to NADH, which can enter the respiratory chain for energy generation. The protein is Soluble pyridine nucleotide transhydrogenase of Stutzerimonas stutzeri (strain A1501) (Pseudomonas stutzeri).